We begin with the raw amino-acid sequence, 233 residues long: MGQKIHPTGFRLAVNKNWSSKWFASSQNFPEMLKQDIEVREFLKKRLGHASVGRVTIERPAKSARITIHSARPGVVIGKKGEDIEVLKQELQKRLGVPVHVNIEEVRKPELDAQIIADGIASQLEKRVMFRRAMKRAMQNAMRLGAEGIKIMSSGRLNGIDIARSEWYREGRVPLHTLRADVDYATSEAKTTYGIIGIKVWVYKGELKPGQVQATPAAPEKKMRKGARNAAAN.

Residues 39 to 107 form the KH type-2 domain; the sequence is VREFLKKRLG…PVHVNIEEVR (69 aa). The tract at residues 212–233 is disordered; sequence VQATPAAPEKKMRKGARNAAAN.

The protein belongs to the universal ribosomal protein uS3 family. In terms of assembly, part of the 30S ribosomal subunit. Forms a tight complex with proteins S10 and S14.

Functionally, binds the lower part of the 30S subunit head. Binds mRNA in the 70S ribosome, positioning it for translation. The sequence is that of Small ribosomal subunit protein uS3 from Chromobacterium violaceum (strain ATCC 12472 / DSM 30191 / JCM 1249 / CCUG 213 / NBRC 12614 / NCIMB 9131 / NCTC 9757 / MK).